The sequence spans 151 residues: Probable cGMP 3',5'-cyclic phosphodiesterase subunit delta (151 aa).

The protein belongs to the PDE6D/unc-119 family. Interacts with Pde6.

It localises to the nucleus. Its subcellular location is the cytoplasm. The chain is Probable cGMP 3',5'-cyclic phosphodiesterase subunit delta from Drosophila simulans (Fruit fly).